A 187-amino-acid polypeptide reads, in one-letter code: NADH-quinone oxidoreductase subunit B (187 aa).

[4Fe-4S] cluster is bound by residues Cys55, Cys56, Cys121, and Cys150.

The protein belongs to the complex I 20 kDa subunit family. NDH-1 is composed of 14 different subunits. Subunits NuoB, C, D, E, F, and G constitute the peripheral sector of the complex. The cofactor is [4Fe-4S] cluster.

The protein resides in the cell inner membrane. The enzyme catalyses a quinone + NADH + 5 H(+)(in) = a quinol + NAD(+) + 4 H(+)(out). Its function is as follows. NDH-1 shuttles electrons from NADH, via FMN and iron-sulfur (Fe-S) centers, to quinones in the respiratory chain. The immediate electron acceptor for the enzyme in this species is believed to be ubiquinone. Couples the redox reaction to proton translocation (for every two electrons transferred, four hydrogen ions are translocated across the cytoplasmic membrane), and thus conserves the redox energy in a proton gradient. The polypeptide is NADH-quinone oxidoreductase subunit B (Bdellovibrio bacteriovorus (strain ATCC 15356 / DSM 50701 / NCIMB 9529 / HD100)).